Here is a 303-residue protein sequence, read N- to C-terminus: Geranylgeranyl pyrophosphate synthase (303 aa).

Lys32, Arg35, and His64 together coordinate isopentenyl diphosphate. The Mg(2+) site is built by Asp71 and Asp75. Dimethylallyl diphosphate is bound at residue Arg80. Arg81 serves as a coordination point for isopentenyl diphosphate. Dimethylallyl diphosphate-binding residues include Lys158, Thr159, Gln192, Lys209, and Lys219.

It belongs to the FPP/GGPP synthase family. Homooligomer. Mg(2+) is required as a cofactor.

It is found in the cytoplasm. The enzyme catalyses isopentenyl diphosphate + dimethylallyl diphosphate = (2E)-geranyl diphosphate + diphosphate. It carries out the reaction isopentenyl diphosphate + (2E)-geranyl diphosphate = (2E,6E)-farnesyl diphosphate + diphosphate. The catalysed reaction is isopentenyl diphosphate + (2E,6E)-farnesyl diphosphate = (2E,6E,10E)-geranylgeranyl diphosphate + diphosphate. It functions in the pathway isoprenoid biosynthesis; farnesyl diphosphate biosynthesis; farnesyl diphosphate from geranyl diphosphate and isopentenyl diphosphate: step 1/1. It participates in isoprenoid biosynthesis; geranyl diphosphate biosynthesis; geranyl diphosphate from dimethylallyl diphosphate and isopentenyl diphosphate: step 1/1. The protein operates within isoprenoid biosynthesis; geranylgeranyl diphosphate biosynthesis; geranylgeranyl diphosphate from farnesyl diphosphate and isopentenyl diphosphate: step 1/1. Functionally, catalyzes the trans-addition of the three molecules of IPP onto DMAPP to form geranylgeranyl pyrophosphate, an important precursor of carotenoids and geranylated proteins. This Dictyostelium discoideum (Social amoeba) protein is Geranylgeranyl pyrophosphate synthase (ggps1).